A 204-amino-acid chain; its full sequence is Probable dTDP-4-oxo-2,6-dideoxy-D-glucose 3,5-epimerase (204 aa).

Substrate is bound by residues R21, E26, 45–47 (QAN), K70, and H117. The Proton donor role is filled by Y130. E141 is a binding site for substrate. The tract at residues 164 to 204 (VGEGTPTHRPWRRPRRPGILPDYEGVPGALHRGGGRRGTGP) is disordered.

This sequence belongs to the dTDP-4-dehydrorhamnose 3,5-epimerase family.

It participates in antibiotic biosynthesis. Involved in the biosynthesis of one of the two 2,6-deoxysugars, dTDP-L-oleandrose, attached to the macrolactone ring oleandolide to produce the aglycone antibiotic oleandomycin. Probably catalyzes the conversion of dTDP-4-keto-2,6-dideoxy-alpha-D-glucose to dTDP-4-keto-2,6-dideoxy-beta-L-galactose. In Streptomyces antibioticus, this protein is Probable dTDP-4-oxo-2,6-dideoxy-D-glucose 3,5-epimerase.